The following is a 235-amino-acid chain: Ribosomal RNA large subunit methyltransferase E (235 aa).

The S-adenosyl-L-methionine site is built by Gly76, Trp78, Asp99, Asp115, and Asp139. The active-site Proton acceptor is the Lys179.

Belongs to the class I-like SAM-binding methyltransferase superfamily. RNA methyltransferase RlmE family.

Its subcellular location is the cytoplasm. It catalyses the reaction uridine(2552) in 23S rRNA + S-adenosyl-L-methionine = 2'-O-methyluridine(2552) in 23S rRNA + S-adenosyl-L-homocysteine + H(+). Its function is as follows. Specifically methylates the uridine in position 2552 of 23S rRNA at the 2'-O position of the ribose in the fully assembled 50S ribosomal subunit. In Rhodopseudomonas palustris (strain BisA53), this protein is Ribosomal RNA large subunit methyltransferase E.